The primary structure comprises 382 residues: RNA binding protein fox-1 homolog 1 (382 aa).

The interval 1–121 (MNCEREQLRG…NKSQPKRLHV (121 aa)) is disordered. Over residues 70–87 (QTHSEQSPADTSAQTVSG) the composition is skewed to polar residues. The span at 88-99 (TATQTDDAAPTD) shows a compositional bias: low complexity. Positions 100–113 (GQPQTQPSENTENK) are enriched in polar residues. In terms of domain architecture, RRM spans 117 to 193 (KRLHVSNIPF…RKIEVNNATA (77 aa)). Residue Arg317 is modified to Asymmetric dimethylarginine. The disordered stretch occupies residues 357-382 (MPQGSSPSTDFRGAKLHTSRPLLSGS).

In terms of assembly, binds to the C-terminus of ATXN2.

It is found in the nucleus. The protein resides in the cytoplasm. RNA-binding protein that regulates alternative splicing events by binding to 5'-UGCAUGU-3' elements. Prevents binding of U2AF2 to the 3'-splice site. Regulates alternative splicing of tissue-specific exons and of differentially spliced exons during erythropoiesis. The polypeptide is RNA binding protein fox-1 homolog 1 (RBFOX1) (Pongo abelii (Sumatran orangutan)).